The sequence spans 218 residues: uncharacterized protein (218 aa).

This is an uncharacterized protein from Methanocaldococcus jannaschii (strain ATCC 43067 / DSM 2661 / JAL-1 / JCM 10045 / NBRC 100440) (Methanococcus jannaschii).